Reading from the N-terminus, the 464-residue chain is Pup--protein ligase (464 aa).

Mg(2+) is bound at residue glutamate 14. Arginine 58 is a binding site for ATP. Tyrosine 60 contacts Mg(2+). Aspartate 62 acts as the Proton acceptor in catalysis. Glutamate 68 contributes to the Mg(2+) binding site. Positions 71 and 430 each coordinate ATP.

Belongs to the Pup ligase/Pup deamidase family. Pup-conjugating enzyme subfamily.

The catalysed reaction is ATP + [prokaryotic ubiquitin-like protein]-L-glutamate + [protein]-L-lysine = ADP + phosphate + N(6)-([prokaryotic ubiquitin-like protein]-gamma-L-glutamyl)-[protein]-L-lysine.. It functions in the pathway protein degradation; proteasomal Pup-dependent pathway. Its pathway is protein modification; protein pupylation. Catalyzes the covalent attachment of the prokaryotic ubiquitin-like protein modifier Pup to the proteasomal substrate proteins, thereby targeting them for proteasomal degradation. This tagging system is termed pupylation. The ligation reaction involves the side-chain carboxylate of the C-terminal glutamate of Pup and the side-chain amino group of a substrate lysine. This is Pup--protein ligase from Micrococcus luteus (strain ATCC 4698 / DSM 20030 / JCM 1464 / CCM 169 / CCUG 5858 / IAM 1056 / NBRC 3333 / NCIMB 9278 / NCTC 2665 / VKM Ac-2230) (Micrococcus lysodeikticus).